Reading from the N-terminus, the 380-residue chain is Ribosomal RNA small subunit methyltransferase, mitochondrial (380 aa).

Residues 1-26 constitute a mitochondrion transit peptide; the sequence is MILRLKDQTLIKINSTRSYLSSLVFR. Residues His-70, Leu-72, Gly-97, Glu-118, Asp-146, and Asn-161 each contribute to the S-adenosyl-L-methionine site.

Belongs to the class I-like SAM-binding methyltransferase superfamily. rRNA adenine N(6)-methyltransferase family.

The protein resides in the mitochondrion. It catalyses the reaction adenosine(1914)/adenosine(1915) in 18S rRNA + 4 S-adenosyl-L-methionine = N(6)-dimethyladenosine(1914)/N(6)-dimethyladenosine(1915) in 18S rRNA + 4 S-adenosyl-L-homocysteine + 4 H(+). Its function is as follows. N6-adenine methyltransferase which modifies the AA dinucleotide at the plant mitochondrial 18S rRNA nucleotides A1914 and A1915. Not active as mitochondrial transcription factor. The sequence is that of Ribosomal RNA small subunit methyltransferase, mitochondrial from Arabidopsis thaliana (Mouse-ear cress).